The following is a 367-amino-acid chain: UDP-N-acetylenolpyruvoylglucosamine reductase 2 (367 aa).

In terms of domain architecture, FAD-binding PCMH-type spans 31-198 (IGGKPRSAVR…LAIELQLLTD (168 aa)). Residue Arg176 is part of the active site. Ser256 (proton donor) is an active-site residue. The active site involves Glu357.

Belongs to the MurB family. The cofactor is FAD.

It localises to the cytoplasm. It carries out the reaction UDP-N-acetyl-alpha-D-muramate + NADP(+) = UDP-N-acetyl-3-O-(1-carboxyvinyl)-alpha-D-glucosamine + NADPH + H(+). It participates in cell wall biogenesis; peptidoglycan biosynthesis. Its function is as follows. Cell wall formation. The protein is UDP-N-acetylenolpyruvoylglucosamine reductase 2 (murB2) of Corynebacterium glutamicum (strain ATCC 13032 / DSM 20300 / JCM 1318 / BCRC 11384 / CCUG 27702 / LMG 3730 / NBRC 12168 / NCIMB 10025 / NRRL B-2784 / 534).